The sequence spans 501 residues: Bifunctional pantoate ligase/cytidylate kinase (501 aa).

A pantoate--beta-alanine ligase region spans residues 1 to 264 (MLSTQAELAA…CGTTRLIDHS (264 aa)). 25–32 (MGGLHQGH) serves as a coordination point for ATP. Residue histidine 32 is the Proton donor of the active site. Glutamine 55 is a (R)-pantoate binding site. Glutamine 55 contacts beta-alanine. Residue 144 to 147 (GEKD) participates in ATP binding. (R)-pantoate is bound at residue glutamine 150. Residues valine 173 and 181–184 (LSSR) each bind ATP. Positions 265 to 501 (FLMTRQPLVA…PEEAWPTPAG (237 aa)) are cytidylate kinase.

In the N-terminal section; belongs to the pantothenate synthetase family. It in the C-terminal section; belongs to the cytidylate kinase family. Type 1 subfamily.

The protein resides in the cytoplasm. The catalysed reaction is (R)-pantoate + beta-alanine + ATP = (R)-pantothenate + AMP + diphosphate + H(+). It carries out the reaction CMP + ATP = CDP + ADP. The enzyme catalyses dCMP + ATP = dCDP + ADP. Its pathway is cofactor biosynthesis; (R)-pantothenate biosynthesis; (R)-pantothenate from (R)-pantoate and beta-alanine: step 1/1. Catalyzes the condensation of pantoate with beta-alanine in an ATP-dependent reaction via a pantoyl-adenylate intermediate. Functionally, catalyzes the transfer of a phosphate group from ATP to either CMP or dCMP to form CDP or dCDP and ADP, respectively. This chain is Bifunctional pantoate ligase/cytidylate kinase, found in Parasynechococcus marenigrum (strain WH8102).